The following is a 179-amino-acid chain: Large ribosomal subunit protein uL5 (179 aa).

This sequence belongs to the universal ribosomal protein uL5 family. As to quaternary structure, part of the 50S ribosomal subunit; part of the 5S rRNA/L5/L18/L25 subcomplex. Contacts the 5S rRNA and the P site tRNA. Forms a bridge to the 30S subunit in the 70S ribosome.

This is one of the proteins that bind and probably mediate the attachment of the 5S RNA into the large ribosomal subunit, where it forms part of the central protuberance. In the 70S ribosome it contacts protein S13 of the 30S subunit (bridge B1b), connecting the 2 subunits; this bridge is implicated in subunit movement. Contacts the P site tRNA; the 5S rRNA and some of its associated proteins might help stabilize positioning of ribosome-bound tRNAs. This is Large ribosomal subunit protein uL5 from Herminiimonas arsenicoxydans.